A 331-amino-acid polypeptide reads, in one-letter code: D-alanine--D-alanine ligase (331 aa).

Residues 116–316 form the ATP-grasp domain; sequence KRQWQTHGLP…YEDFVLQLAA (201 aa). 142–197 contacts ATP; sequence ADRLGLPLIVKPAREGSSIGLTKVTSVAELPAAYEKAARLDRDVMAEQFIEGDELT. Residues Asp-269, Glu-283, and Asn-285 each coordinate Mg(2+).

It belongs to the D-alanine--D-alanine ligase family. It depends on Mg(2+) as a cofactor. The cofactor is Mn(2+).

It is found in the cytoplasm. It carries out the reaction 2 D-alanine + ATP = D-alanyl-D-alanine + ADP + phosphate + H(+). It functions in the pathway cell wall biogenesis; peptidoglycan biosynthesis. Functionally, cell wall formation. This Ralstonia pickettii (strain 12J) protein is D-alanine--D-alanine ligase.